The primary structure comprises 123 residues: MCEVCVMVTSSQPRKQRKFRYEAPQHVRSNFINARLSEELSKKYGRTARVIVGDTVKVMRGDAAGTEGKVREIDVKREKVVVEGVSVARADGKEEARPIHPSNLMITKLVLDDPKRVASLERK.

The protein belongs to the universal ribosomal protein uL24 family. In terms of assembly, part of the 50S ribosomal subunit.

Functionally, one of two assembly initiator proteins, it binds directly to the 5'-end of the 23S rRNA, where it nucleates assembly of the 50S subunit. Located at the polypeptide exit tunnel on the outside of the subunit. This Methanocella arvoryzae (strain DSM 22066 / NBRC 105507 / MRE50) protein is Large ribosomal subunit protein uL24.